A 433-amino-acid chain; its full sequence is 2,2-dialkylglycine decarboxylase (433 aa).

Residue Lys-272 is modified to N6-(pyridoxal phosphate)lysine.

Belongs to the class-III pyridoxal-phosphate-dependent aminotransferase family. Homotetramer. Pyridoxal 5'-phosphate serves as cofactor.

It carries out the reaction 2,2-dialkylglycine + pyruvate + H(+) = dialkyl ketone + L-alanine + CO2. Functionally, the dialkylglycine decarboxylase is of interest because it normally catalyzes both decarboxylation and amino transfer. It may be more properly described as a decarboxylating aminotransferase rather than an aminotransferring decarboxylase. The protein is 2,2-dialkylglycine decarboxylase (dgdA) of Burkholderia cepacia (Pseudomonas cepacia).